The primary structure comprises 162 residues: 2-C-methyl-D-erythritol 2,4-cyclodiphosphate synthase (162 aa).

2 residues coordinate a divalent metal cation: aspartate 12 and histidine 14. 4-CDP-2-C-methyl-D-erythritol 2-phosphate is bound by residues 12 to 14 (DVH) and 38 to 39 (HS). Histidine 46 provides a ligand contact to a divalent metal cation. 4-CDP-2-C-methyl-D-erythritol 2-phosphate is bound by residues 60–62 (DIG), 65–69 (FPDTD), and arginine 146.

It belongs to the IspF family. Homotrimer. The cofactor is a divalent metal cation.

The catalysed reaction is 4-CDP-2-C-methyl-D-erythritol 2-phosphate = 2-C-methyl-D-erythritol 2,4-cyclic diphosphate + CMP. It functions in the pathway isoprenoid biosynthesis; isopentenyl diphosphate biosynthesis via DXP pathway; isopentenyl diphosphate from 1-deoxy-D-xylulose 5-phosphate: step 4/6. In terms of biological role, involved in the biosynthesis of isopentenyl diphosphate (IPP) and dimethylallyl diphosphate (DMAPP), two major building blocks of isoprenoid compounds. Catalyzes the conversion of 4-diphosphocytidyl-2-C-methyl-D-erythritol 2-phosphate (CDP-ME2P) to 2-C-methyl-D-erythritol 2,4-cyclodiphosphate (ME-CPP) with a corresponding release of cytidine 5-monophosphate (CMP). In Bordetella avium (strain 197N), this protein is 2-C-methyl-D-erythritol 2,4-cyclodiphosphate synthase.